A 156-amino-acid polypeptide reads, in one-letter code: Probable cyclic pyranopterin monophosphate synthase (156 aa).

Substrate contacts are provided by residues 74 to 76 (MCH) and 110 to 111 (ME). Asp125 is a catalytic residue.

This sequence belongs to the MoaC family. Homohexamer; trimer of dimers.

The enzyme catalyses (8S)-3',8-cyclo-7,8-dihydroguanosine 5'-triphosphate = cyclic pyranopterin phosphate + diphosphate. The protein operates within cofactor biosynthesis; molybdopterin biosynthesis. In terms of biological role, catalyzes the conversion of (8S)-3',8-cyclo-7,8-dihydroguanosine 5'-triphosphate to cyclic pyranopterin monophosphate (cPMP). The polypeptide is Probable cyclic pyranopterin monophosphate synthase (Methanospirillum hungatei JF-1 (strain ATCC 27890 / DSM 864 / NBRC 100397 / JF-1)).